The chain runs to 360 residues: Phospho-N-acetylmuramoyl-pentapeptide-transferase (360 aa).

A run of 10 helical transmembrane segments spans residues 21-41, 73-93, 94-114, 132-152, 168-188, 199-219, 235-255, 263-283, 288-308, and 338-358; these read YITV…LWIG, TMGG…WANL, ANPY…IGFV, WKYF…YAIG, IMPQ…VGTS, GLAI…AWAT, FSAE…GFLW, VFMG…VAVL, FLLV…ILQV, and VIVR…VTLK.

It belongs to the glycosyltransferase 4 family. MraY subfamily. It depends on Mg(2+) as a cofactor.

It localises to the cell inner membrane. It carries out the reaction UDP-N-acetyl-alpha-D-muramoyl-L-alanyl-gamma-D-glutamyl-meso-2,6-diaminopimeloyl-D-alanyl-D-alanine + di-trans,octa-cis-undecaprenyl phosphate = di-trans,octa-cis-undecaprenyl diphospho-N-acetyl-alpha-D-muramoyl-L-alanyl-D-glutamyl-meso-2,6-diaminopimeloyl-D-alanyl-D-alanine + UMP. Its pathway is cell wall biogenesis; peptidoglycan biosynthesis. In terms of biological role, catalyzes the initial step of the lipid cycle reactions in the biosynthesis of the cell wall peptidoglycan: transfers peptidoglycan precursor phospho-MurNAc-pentapeptide from UDP-MurNAc-pentapeptide onto the lipid carrier undecaprenyl phosphate, yielding undecaprenyl-pyrophosphoryl-MurNAc-pentapeptide, known as lipid I. This Pasteurella multocida (strain Pm70) protein is Phospho-N-acetylmuramoyl-pentapeptide-transferase.